The chain runs to 682 residues: Protein asunder (682 aa).

Residues 517 to 570 (NGARLKLSKAKDQYRLLYRELEQLIHLNATTVHHKNLLESLQSLRAAYGEAKSE) adopt a coiled-coil conformation. The segment covering 571–583 (PNSSLLRSYTESP) has biased composition (polar residues). The tract at residues 571 to 612 (PNSSLLRSYTESPHSPERLEPIPSGGSSGSNSNSLLKASKRR) is disordered. Positions 606–612 (LKASKRR) match the Nuclear localization signal (NLS) motif.

It belongs to the Integrator subunit 13 family. In terms of assembly, belongs to the multiprotein complex Integrator, at least composed of IntS1, IntS2, IntS3, IntS4, omd/IntS5, IntS6, defl/IntS7, IntS8, IntS9, IntS10, IntS11, IntS12, asun/IntS13, IntS14 and IntS15. The core complex associates with protein phosphatase 2A subunits mts/PP2A and Pp2A-29B, to form the Integrator-PP2A (INTAC) complex. Phosphorylated.

It is found in the nucleus. The protein localises to the cytoplasm. It localises to the perinuclear region. In terms of biological role, component of the integrator complex, a multiprotein complex that terminates RNA polymerase II (Pol II) transcription in the promoter-proximal region of genes. The integrator complex provides a quality checkpoint during transcription elongation by driving premature transcription termination of transcripts that are unfavorably configured for transcriptional elongation: the complex terminates transcription by (1) catalyzing dephosphorylation of the C-terminal domain (CTD) of Pol II subunit Polr2A/Rbp1 and Spt5, and (2) degrading the exiting nascent RNA transcript via endonuclease activity. The integrator complex is also involved in the 3'-end processing of the U7 snRNA, and also the spliceosomal snRNAs U1, U2, U4 and U5. The sequence is that of Protein asunder (asun) from Drosophila ananassae (Fruit fly).